Here is a 223-residue protein sequence, read N- to C-terminus: Thiamine-phosphate synthase (223 aa).

4-amino-2-methyl-5-(diphosphooxymethyl)pyrimidine-binding positions include 37 to 41 (QFREK) and aspartate 72. Mg(2+) contacts are provided by aspartate 73 and aspartate 92. Position 110 (serine 110) interacts with 4-amino-2-methyl-5-(diphosphooxymethyl)pyrimidine. 136–138 (TQS) contributes to the 2-[(2R,5Z)-2-carboxy-4-methylthiazol-5(2H)-ylidene]ethyl phosphate binding site. 4-amino-2-methyl-5-(diphosphooxymethyl)pyrimidine is bound at residue lysine 139. 2-[(2R,5Z)-2-carboxy-4-methylthiazol-5(2H)-ylidene]ethyl phosphate is bound by residues glycine 168 and 188-189 (IS).

This sequence belongs to the thiamine-phosphate synthase family. The cofactor is Mg(2+).

It carries out the reaction 2-[(2R,5Z)-2-carboxy-4-methylthiazol-5(2H)-ylidene]ethyl phosphate + 4-amino-2-methyl-5-(diphosphooxymethyl)pyrimidine + 2 H(+) = thiamine phosphate + CO2 + diphosphate. The catalysed reaction is 2-(2-carboxy-4-methylthiazol-5-yl)ethyl phosphate + 4-amino-2-methyl-5-(diphosphooxymethyl)pyrimidine + 2 H(+) = thiamine phosphate + CO2 + diphosphate. It catalyses the reaction 4-methyl-5-(2-phosphooxyethyl)-thiazole + 4-amino-2-methyl-5-(diphosphooxymethyl)pyrimidine + H(+) = thiamine phosphate + diphosphate. The protein operates within cofactor biosynthesis; thiamine diphosphate biosynthesis; thiamine phosphate from 4-amino-2-methyl-5-diphosphomethylpyrimidine and 4-methyl-5-(2-phosphoethyl)-thiazole: step 1/1. Condenses 4-methyl-5-(beta-hydroxyethyl)thiazole monophosphate (THZ-P) and 2-methyl-4-amino-5-hydroxymethyl pyrimidine pyrophosphate (HMP-PP) to form thiamine monophosphate (TMP). This Streptococcus agalactiae serotype Ia (strain ATCC 27591 / A909 / CDC SS700) protein is Thiamine-phosphate synthase.